Reading from the N-terminus, the 323-residue chain is Sphingolipid delta(4)-desaturase/C4-monooxygenase DES2 (323 aa).

Gly2 is lipidated: N-myristoyl glycine. Helical transmembrane passes span 41-61 (PHIK…CWLV) and 68-88 (WLLF…TLAI). Positions 89–93 (HDISH) match the Histidine box-1 motif. Residues 95 to 99 (TAFGT) are required for C4-hydroxylase activity. Residues 128–132 (HVDHH) carry the Histidine box-2 motif. Residues 210 to 231 (VYLLGSSLLGLGLHPISGHFVA) form a helical membrane-spanning segment. Residues 259–263 (HMEHH) carry the Histidine box-3 motif.

This sequence belongs to the fatty acid desaturase type 1 family. DEGS subfamily. Highly expressed in intestinal crypt cells and adjacent epithelial cells (at protein level).

Its subcellular location is the endoplasmic reticulum membrane. It catalyses the reaction a dihydroceramide + 2 Fe(II)-[cytochrome b5] + O2 + 2 H(+) = a phytoceramide + 2 Fe(III)-[cytochrome b5] + H2O. The enzyme catalyses an N-acylsphinganine + 2 Fe(II)-[cytochrome b5] + O2 + 2 H(+) = an N-acylsphing-4-enine + 2 Fe(III)-[cytochrome b5] + 2 H2O. The catalysed reaction is an N-acylsphinganine + 2 Fe(II)-[cytochrome b5] + O2 + 2 H(+) = an N-acyl-(4R)-4-hydroxysphinganine + 2 Fe(III)-[cytochrome b5] + H2O. It carries out the reaction N-octanoylsphinganine + 2 Fe(II)-[cytochrome b5] + O2 + 2 H(+) = N-octanoyl-4-hydroxysphinganine + 2 Fe(III)-[cytochrome b5] + H2O. It participates in membrane lipid metabolism; sphingolipid biosynthesis. Functionally, bifunctional enzyme which acts both as a sphingolipid delta(4)-desaturase and a sphingolipid C4-monooxygenase. The chain is Sphingolipid delta(4)-desaturase/C4-monooxygenase DES2 from Mus musculus (Mouse).